The following is a 544-amino-acid chain: MNTLRSMSISRRLWLILVVAVAMLVVLGLLMLRQIHGDLYQAKAEKTRHVVQTAAGVLAYYQGLEAAGTLSREAAQQQALQVVRALRYDHDDYFWINDLGPKMIMHPANPKLDDQDLSAIRDPDGFAVFNEMVALARQQDAGPVNYRWPKPGASEPVAKTSYIQLFKPWGWIIGSGVYVDDVQAEFARQLRDASLVGVGIALLMALVVMLIARSIARPLQEAVQAMGNIASGESDLTRRLDTHGSDEITHLGEHFNRFNGKLQGVVGQLQGAAHALAQSAGHVGDNAGAAQQRSAQQSLQMDQVATAVNEVTYAVQDVAKTAEQAAGEMRTAQQQVTHGQQAIHGSLAQIDRLSLTIDEAVQVIRDLAGHSTRIGGVLDVIRSIAEQTNLLALNAAIEAARAGEQGRGFAVVADEVRLLAQRTAQSTAEIHTMIEHLQSQSDAAVKAIDTSSEASRQTVEQAREAGASLDAINQVLNNLTALNASIASATLQQSHVVEEINRNVLDTAGLSQQTADAARQSSDAGVALGRLSEELEQLLRQFRV.

3 helical membrane passes run 12–32 (RLWL…LLML), 50–70 (VVQT…AGTL), and 192–212 (DASL…MLIA). The region spanning 213–267 (RSIARPLQEAVQAMGNIASGESDLTRRLDTHGSDEITHLGEHFNRFNGKLQGVVG) is the HAMP domain. The Methyl-accepting transducer domain occupies 272–508 (AAHALAQSAG…EINRNVLDTA (237 aa)).

Belongs to the methyl-accepting chemotaxis (MCP) protein family.

Its subcellular location is the cell membrane. Functionally, chemotactic-signal transducers respond to changes in the concentration of attractants and repellents in the environment, transduce a signal from the outside to the inside of the cell, and facilitate sensory adaptation through the variation of the level of methylation. McpP is a chemoreceptor that responds specifically to some C2 and C3 carboxylic acids. Recognizes acetate, pyruvate, propionate, and L-lactate. This Pseudomonas putida (strain ATCC 47054 / DSM 6125 / CFBP 8728 / NCIMB 11950 / KT2440) protein is Methyl-accepting chemotaxis protein McpP.